We begin with the raw amino-acid sequence, 437 residues long: Protein translocase subunit SecY (437 aa).

10 helical membrane passes run 23–43 (IVFL…PIPG), 77–97 (IFAL…LLTL), 125–145 (LILA…IAGI), 154–174 (FYFY…LMWL), 183–203 (IGNG…PSAI), 217–237 (ILLF…VVFM), 271–291 (MAGV…ATII), 315–335 (YLIL…GLVF), 367–387 (IMLR…LIPE), and 395–415 (VPFY…IDFI).

It belongs to the SecY/SEC61-alpha family. Component of the Sec protein translocase complex. Heterotrimer consisting of SecY, SecE and SecG subunits. The heterotrimers can form oligomers, although 1 heterotrimer is thought to be able to translocate proteins. Interacts with the ribosome. Interacts with SecDF, and other proteins may be involved. Interacts with SecA.

The protein resides in the cell membrane. The central subunit of the protein translocation channel SecYEG. Consists of two halves formed by TMs 1-5 and 6-10. These two domains form a lateral gate at the front which open onto the bilayer between TMs 2 and 7, and are clamped together by SecE at the back. The channel is closed by both a pore ring composed of hydrophobic SecY resides and a short helix (helix 2A) on the extracellular side of the membrane which forms a plug. The plug probably moves laterally to allow the channel to open. The ring and the pore may move independently. This chain is Protein translocase subunit SecY, found in Buchnera aphidicola subsp. Acyrthosiphon pisum (strain APS) (Acyrthosiphon pisum symbiotic bacterium).